The primary structure comprises 479 residues: 5-hydroxytryptamine receptor 2B (479 aa).

The Extracellular segment spans residues 1 to 55 (MASSYKMSEQSTTSEHILQKTCDHLILTNRSGLETDSVAEEMKQTVEGQGHTVHW). An N-linked (GlcNAc...) asparagine glycan is attached at asparagine 29. A helical transmembrane segment spans residues 56 to 78 (AALLILAVIIPTIGGNILVILAV). Topologically, residues 79–89 (ALEKRLQYATN) are cytoplasmic. A helical transmembrane segment spans residues 90 to 112 (YFLMSLAIADLLVGLFVMPIALL). At 113-128 (TIMFEAIWPLPLALCP) the chain is on the extracellular side. Cysteine 127 and cysteine 206 are joined by a disulfide. Residues 129 to 150 (AWLFLDVLFSTASIMHLCAISL) form a helical membrane-spanning segment. Ergotamine contacts are provided by aspartate 134 and threonine 139. A DRY motif; important for ligand-induced conformation changes motif is present at residues 151 to 153 (DRY). At 151–170 (DRYIAIKKPIQANQCNSRAT) the chain is on the cytoplasmic side. The chain crosses the membrane as a helical span at residues 171 to 191 (AFIKITVVWLISIGIAIPVPI). Over 192–215 (KGIETDVINPHNVTCELTKDRFGS) the chain is Extracellular. Leucine 208 is an ergotamine binding site. The [DE]RFG motif; may stabilize a conformation that preferentially activates signaling via beta-arrestin family members signature appears at 211–214 (DRFG). A helical transmembrane segment spans residues 216 to 238 (FMVFGSLAAFFAPLTIMVVTYFL). The Cytoplasmic portion of the chain corresponds to 239 to 323 (TIHTLQKKAY…TISNEQRASK (85 aa)). The chain crosses the membrane as a helical span at residues 324–344 (ALGVVFFLFLLMWCPFFITNL). Over 345 to 359 (TLALCDSCNQTTLKT) the chain is Extracellular. A disulfide bridge connects residues cysteine 349 and cysteine 352. A helical transmembrane segment spans residues 360 to 381 (LLEIFVWIGYVSSGVNPLIYTL). The NPxxY motif; important for ligand-induced conformation changes and signaling signature appears at 375-379 (NPLIY). Residues 382–479 (FNKTFREAFG…DKAEEQVSYI (98 aa)) lie on the Cytoplasmic side of the membrane. Residue cysteine 396 is the site of S-palmitoyl cysteine attachment. The short motif at 477-479 (SYI) is the PDZ-binding element.

This sequence belongs to the G-protein coupled receptor 1 family. In terms of assembly, interacts (via C-terminus) with MPDZ. As to expression, ubiquitous. Detected in intestine, heart, skeletal muscle, testis, urinary bladder, stomach, liver, lung, brain and kidney. Detected in osteoblasts. Detected in the raphe nucleus in the brain, in dorsal root ganglion neurons, the brain stem, cerebellum and spinal cord. Detected in interstitial cells of Cajal in the small intestine.

The protein localises to the cell membrane. Its subcellular location is the synapse. It localises to the synaptosome. G-protein coupled receptor for 5-hydroxytryptamine (serotonin). Also functions as a receptor for various ergot alkaloid derivatives and psychoactive substances. Ligand binding causes a conformation change that triggers signaling via guanine nucleotide-binding proteins (G proteins) and modulates the activity of downstream effectors. HTR2B is coupled to G(q)/G(11) G alpha proteins and activates phospholipase C-beta, releasing diacylglycerol (DAG) and inositol 1,4,5-trisphosphate (IP3) second messengers that modulate the activity of phosphatidylinositol 3-kinase and promote the release of Ca(2+) ions from intracellular stores, respectively. Beta-arrestin family members inhibit signaling via G proteins and mediate activation of alternative signaling pathways. Plays a role in the regulation of dopamine and 5-hydroxytryptamine release, 5-hydroxytryptamine uptake and in the regulation of extracellular dopamine and 5-hydroxytryptamine levels, and thereby affects neural activity. May play a role in the perception of pain. Plays a role in the regulation of behavior, including impulsive behavior. Required for normal proliferation of embryonic cardiac myocytes and normal heart development. Protects cardiomyocytes against apoptosis. Plays a role in the adaptation of pulmonary arteries to chronic hypoxia. Plays a role in vasoconstriction. Required for normal osteoblast function and proliferation, and for maintaining normal bone density. Required for normal proliferation of the interstitial cells of Cajal in the intestine. The sequence is that of 5-hydroxytryptamine receptor 2B (Htr2b) from Mus musculus (Mouse).